The sequence spans 689 residues: tRNA 5-methylaminomethyl-2-thiouridine biosynthesis bifunctional protein MnmC (689 aa).

The segment at 1-245 (MNQRPIQTAT…KREMLTGTLP (245 aa)) is tRNA (mnm(5)s(2)U34)-methyltransferase. Positions 270–689 (IGGGIVSALT…RSPATQESSR (420 aa)) are FAD-dependent cmnm(5)s(2)U34 oxidoreductase.

The protein in the N-terminal section; belongs to the methyltransferase superfamily. tRNA (mnm(5)s(2)U34)-methyltransferase family. It in the C-terminal section; belongs to the DAO family. FAD serves as cofactor.

It localises to the cytoplasm. The enzyme catalyses 5-aminomethyl-2-thiouridine(34) in tRNA + S-adenosyl-L-methionine = 5-methylaminomethyl-2-thiouridine(34) in tRNA + S-adenosyl-L-homocysteine + H(+). Its function is as follows. Catalyzes the last two steps in the biosynthesis of 5-methylaminomethyl-2-thiouridine (mnm(5)s(2)U) at the wobble position (U34) in tRNA. Catalyzes the FAD-dependent demodification of cmnm(5)s(2)U34 to nm(5)s(2)U34, followed by the transfer of a methyl group from S-adenosyl-L-methionine to nm(5)s(2)U34, to form mnm(5)s(2)U34. The chain is tRNA 5-methylaminomethyl-2-thiouridine biosynthesis bifunctional protein MnmC from Yersinia pestis.